Reading from the N-terminus, the 653-residue chain is Chaperone protein HtpG (653 aa).

Residues 1–361 are a; substrate-binding; it reads MSETNQVQNH…SNDLPLNVSR (361 aa). A b region spans residues 362-578; it reads EILQDNKVTQ…DDDMSSQMAK (217 aa). Residues 579–653 form a c region; it reads LMASVGQEVP…LNKLMLSLTK (75 aa).

It belongs to the heat shock protein 90 family. As to quaternary structure, homodimer.

The protein resides in the cytoplasm. In terms of biological role, molecular chaperone. Has ATPase activity. In Colwellia psychrerythraea (strain 34H / ATCC BAA-681) (Vibrio psychroerythus), this protein is Chaperone protein HtpG.